A 277-amino-acid polypeptide reads, in one-letter code: 2,3,4,5-tetrahydropyridine-2,6-dicarboxylate N-succinyltransferase (277 aa).

Residues Arg106 and Asp143 each coordinate substrate.

The protein belongs to the transferase hexapeptide repeat family. As to quaternary structure, homotrimer.

The protein resides in the cytoplasm. It carries out the reaction (S)-2,3,4,5-tetrahydrodipicolinate + succinyl-CoA + H2O = (S)-2-succinylamino-6-oxoheptanedioate + CoA. Its pathway is amino-acid biosynthesis; L-lysine biosynthesis via DAP pathway; LL-2,6-diaminopimelate from (S)-tetrahydrodipicolinate (succinylase route): step 1/3. The polypeptide is 2,3,4,5-tetrahydropyridine-2,6-dicarboxylate N-succinyltransferase (Xylella fastidiosa (strain 9a5c)).